We begin with the raw amino-acid sequence, 63 residues long: Cytochrome c oxidase subunit 5A, mitochondrial (63 aa).

It belongs to the cytochrome c oxidase subunit 5A family. As to quaternary structure, component of the cytochrome c oxidase (complex IV, CIV), a multisubunit enzyme composed of a catalytic core of 3 subunits and several supernumerary subunits. The complex exists as a monomer or a dimer and forms supercomplexes (SCs) in the inner mitochondrial membrane with ubiquinol-cytochrome c oxidoreductase (cytochrome b-c1 complex, complex III, CIII).

The protein localises to the mitochondrion inner membrane. The protein operates within energy metabolism; oxidative phosphorylation. In terms of biological role, component of the cytochrome c oxidase, the last enzyme in the mitochondrial electron transport chain which drives oxidative phosphorylation. The respiratory chain contains 3 multisubunit complexes succinate dehydrogenase (complex II, CII), ubiquinol-cytochrome c oxidoreductase (cytochrome b-c1 complex, complex III, CIII) and cytochrome c oxidase (complex IV, CIV), that cooperate to transfer electrons derived from NADH and succinate to molecular oxygen, creating an electrochemical gradient over the inner membrane that drives transmembrane transport and the ATP synthase. Cytochrome c oxidase is the component of the respiratory chain that catalyzes the reduction of oxygen to water. Electrons originating from reduced cytochrome c in the intermembrane space (IMS) are transferred via the dinuclear copper A center (CU(A)) of subunit 2 and heme A of subunit 1 to the active site in subunit 1, a binuclear center (BNC) formed by heme A3 and copper B (CU(B)). The BNC reduces molecular oxygen to 2 water molecules using 4 electrons from cytochrome c in the IMS and 4 protons from the mitochondrial matrix. In Manduca sexta (Tobacco hawkmoth), this protein is Cytochrome c oxidase subunit 5A, mitochondrial (COVA).